The sequence spans 400 residues: tRNA(Met) cytidine acetate ligase (400 aa).

ATP contacts are provided by residues 7-20 (IVEY…HQYH), Gly101, Asn162, and Arg187.

This sequence belongs to the TmcAL family.

It is found in the cytoplasm. It catalyses the reaction cytidine(34) in elongator tRNA(Met) + acetate + ATP = N(4)-acetylcytidine(34) in elongator tRNA(Met) + AMP + diphosphate. In terms of biological role, catalyzes the formation of N(4)-acetylcytidine (ac(4)C) at the wobble position of elongator tRNA(Met), using acetate and ATP as substrates. First activates an acetate ion to form acetyladenylate (Ac-AMP) and then transfers the acetyl group to tRNA to form ac(4)C34. This is tRNA(Met) cytidine acetate ligase from Oceanobacillus iheyensis (strain DSM 14371 / CIP 107618 / JCM 11309 / KCTC 3954 / HTE831).